We begin with the raw amino-acid sequence, 325 residues long: Transcription initiation factor IIB 2 (325 aa).

Residues 1–13 are compositionally biased toward polar residues; it reads MSDSTIRTYSSDQ. The disordered stretch occupies residues 1 to 29; the sequence is MSDSTIRTYSSDQRQTDNDETVSTPDEDV. The segment at 28-58 adopts a TFIIB-type zinc-finger fold; that stretch reads DVLTCPECGGQVIDDEEHGESVCVDCGLVVE. Cys32, Cys35, Cys50, and Cys53 together coordinate Zn(2+). The disordered stretch occupies residues 73–93; sequence STEKDEKSRVGAPTTNMMHDK. A run of 2 repeats spans residues 144-227 and 238-319.

It belongs to the TFIIB family.

In terms of biological role, stabilizes TBP binding to an archaeal box-A promoter. Also responsible for recruiting RNA polymerase II to the pre-initiation complex (DNA-TBP-TFIIB). This is Transcription initiation factor IIB 2 from Halobacterium salinarum (strain ATCC 700922 / JCM 11081 / NRC-1) (Halobacterium halobium).